The following is a 601-amino-acid chain: Elongation factor 4 (601 aa).

The region spanning 5–188 (SHIRNFAIIA…ALVLRLPPPT (184 aa)) is the tr-type G domain. GTP-binding positions include 17–22 (DHGKST) and 135–138 (NKID).

Belongs to the TRAFAC class translation factor GTPase superfamily. Classic translation factor GTPase family. LepA subfamily.

The protein resides in the cell inner membrane. The catalysed reaction is GTP + H2O = GDP + phosphate + H(+). In terms of biological role, required for accurate and efficient protein synthesis under certain stress conditions. May act as a fidelity factor of the translation reaction, by catalyzing a one-codon backward translocation of tRNAs on improperly translocated ribosomes. Back-translocation proceeds from a post-translocation (POST) complex to a pre-translocation (PRE) complex, thus giving elongation factor G a second chance to translocate the tRNAs correctly. Binds to ribosomes in a GTP-dependent manner. This Rhodospirillum rubrum (strain ATCC 11170 / ATH 1.1.1 / DSM 467 / LMG 4362 / NCIMB 8255 / S1) protein is Elongation factor 4.